Reading from the N-terminus, the 186-residue chain is piRNA-mediated silencing protein C19orf84 (186 aa).

Disordered stretches follow at residues 1–42 (MEQP…NSTD) and 89–186 (SQAG…ETEY). The segment covering 13-22 (NNLSLPSSGT) has biased composition (polar residues). Pro residues predominate over residues 24–36 (PWPPAPLPAPPPL). Basic residues predominate over residues 114–126 (RPGWGRGLHRRGL). Pro residues predominate over residues 145 to 157 (RTPPMTLPSPPTL).

As to quaternary structure, interacts with SPOCD1.

It is found in the nucleus. The protein localises to the nucleoplasm. Its function is as follows. Protein adapter involved in piRNA-directed transposon methylation by connecting PIWIL4-piRNA and DNA methylation machineries. The PIWIL4-piRNA pathway plays a central role during spermatogenesis by directing transposon DNA methylation and silencing, thereby preventing their mobilization, which is essential for the germline integrity. The chain is piRNA-mediated silencing protein C19orf84 from Homo sapiens (Human).